A 559-amino-acid polypeptide reads, in one-letter code: Arginine--tRNA ligase (559 aa).

The 'HIGH' region motif lies at 116 to 126 (ANPNGPLHVGH).

This sequence belongs to the class-I aminoacyl-tRNA synthetase family.

The protein resides in the cytoplasm. The enzyme catalyses tRNA(Arg) + L-arginine + ATP = L-arginyl-tRNA(Arg) + AMP + diphosphate. In Methanosphaerula palustris (strain ATCC BAA-1556 / DSM 19958 / E1-9c), this protein is Arginine--tRNA ligase.